Reading from the N-terminus, the 264-residue chain is ELL-associated factor 2 (264 aa).

Disordered regions lie at residues 114–154 and 169–264; these read EGSS…PSSP and MDQL…DSDD. Residues 117-142 are compositionally biased toward polar residues; it reads SKVQSRIEQQQQQIRNSSKTPNNIKN. Residues 173 to 196 show a composition bias toward low complexity; that stretch reads SSSDSSSDSKSSSSSSSSSENSSS. Residues 228–238 are compositionally biased toward basic and acidic residues; the sequence is VPDKDASHNRS. Polar residues predominate over residues 239–264; the sequence is QENSGHMMNTLRSDLQLSESGSDSDD.

This sequence belongs to the EAF family.

The protein localises to the nucleus speckle. In terms of biological role, may act as a transcriptional transactivator. The chain is ELL-associated factor 2 (EAF2) from Gallus gallus (Chicken).